The primary structure comprises 253 residues: uncharacterized protein (253 aa).

An N-terminal signal peptide occupies residues 1 to 19; the sequence is MRYLKKVTIYISLLILVSG. Cysteine 20 carries the N-palmitoyl cysteine lipid modification. Residue cysteine 20 is the site of S-diacylglycerol cysteine attachment.

This sequence belongs to the staphylococcal tandem lipoprotein family.

It localises to the cell membrane. This is an uncharacterized protein from Staphylococcus epidermidis (strain ATCC 35984 / DSM 28319 / BCRC 17069 / CCUG 31568 / BM 3577 / RP62A).